The chain runs to 1486 residues: MIERGKFRSLTLINWNGFFARTFDLDELVTTLSGGNGAGKSTTMAAFVTALIPDLTLLHFRNTTEAGATSGSRDKGLHGKLKAGVCYSMLDTINSRHQRVVVGVRLQQVAGRDRKVDIKPFAIQGLPMSVQPTQLVTETLNERQARVLPLNELKDKLEAMEGVQFKQFNSITDYHSLMFDLGIIARRLRSASDRSKFYRLIEASLYGGISSAITRSLRDYLLPENSGVRKAFQDMEAALRENRMTLEAIRVTQSDRDLFKHLISEATNYVAADYMRHANERRVHLDKALEFRRELHTSRQQLAAEQYKHVDMARELAEHNGAEGDLEADYQAASDHLNLVQTALRQQEKIERYEADLDELQIRLEEQNEVVAEAIERQQENEARAEAAELEVDELKSQLADYQQALDVQQTRAIQYNQAIAALNRAKELCHLPDLTADCAAEWLETFQAKELEATEKMLSLEQKMSMAQTAHSQFEQAYQLVVAINGPLARNEAWDVARELLREGVDQRHLAEQVQPLRMRLSELEQRLREQQEAERLLADFCKRQGKNFDIDELEALHQELEARIASLSDSVSNAREERMALRQEQEQLQSRIQSLMQRAPVWLAAQNSLNQLSEQCGEEFTSSQDVTEYLQQLLEREREAIVERDEVGARKNAVDEEIERLSQPGGSEDQRLNALAERFGGVLLSEIYDDVSLEDAPYFSALYGPSRHAIVVPDLSQVTEHLEGLTDCPEDLYLIEGDPQSFDDSVFSVDELEKAVVVKIADRQWRYSRFPEVPLFGRAARESRIESLHAEREVLSERFATLSFDVQKTQRLHQAFSRFIGSHLAVAFESDPEAEIRQLNSRRVELERALSNHENDNQQQRIQFEQAKEGVTALNRILPRLNLLADDSLADRVDEIRERLDEAQEAARFVQQFGNQLAKLEPIVSVLQSDPEQFEQLKEDYAYSQQMQRDARQQAFALTEVVQRRAHFSYSDSAEMLSGNSDLNEKLRERLEQAEAERTRAREALRGHAAQLSQYNQVLASLKSSYDTKKELLNDLQRELQDIGVRADSGAEERARIRRDELHAQLSNNRSRRNQLEKALTFCEAEMDNLTRKLRKLERDYFEMREQVVTAKAGWCAVMRMVKDNGVERRLHRRELAYLSADDLRSMSDKALGALRLAVADNEHLRDVLRMSEDPKRPERKIQFFVAVYQHLRERIRQDIIRTDDPVEAIEQMEIELSRLTEELTSREQKLAISSRSVANIIRKTIQREQNRIRMLNQGLQNVSFGQVNSVRLNVNVRETHAMLLDVLSEQHEQHQDLFNSNRLTFSEALAKLYQRLNPQIDMGQRTPQTIGEELLDYRNYLEMEVEVNRGSDGWLRAESGALSTGEAIGTGMSILVMVVQSWEDESRRLRGKDISPCRLLFLDEAARLDARSIATLFELCERLQMQLIIAAPENISPEKGTTYKLVRKVFQNTEHVHVVGLRGFAPQLPETLPGTDEAPSQAS.

Residue 34–41 participates in ATP binding; sequence GGNGAGKS. Coiled-coil stretches lie at residues 326 to 418, 444 to 480, and 509 to 603; these read LEAD…QYNQ, LETF…QAYQ, and RHLA…RAPV. The flexible hinge stretch occupies residues 666–783; the sequence is PGGSEDQRLN…EVPLFGRAAR (118 aa). Coiled-coil stretches lie at residues 835-923, 977-1115, and 1209-1266; these read EAEI…AKLE, EMLS…TAKA, and VEAI…QNVS.

This sequence belongs to the SMC family. MukB subfamily. In terms of assembly, homodimerization via its hinge domain. Binds to DNA via its C-terminal region. Interacts, and probably forms a ternary complex, with MukE and MukF via its C-terminal region. The complex formation is stimulated by calcium or magnesium. Interacts with tubulin-related protein FtsZ.

The protein localises to the cytoplasm. Its subcellular location is the nucleoid. Functionally, plays a central role in chromosome condensation, segregation and cell cycle progression. Functions as a homodimer, which is essential for chromosome partition. Involved in negative DNA supercoiling in vivo, and by this means organize and compact chromosomes. May achieve or facilitate chromosome segregation by condensation DNA from both sides of a centrally located replisome during cell division. The polypeptide is Chromosome partition protein MukB (Escherichia coli (strain K12 / MC4100 / BW2952)).